Consider the following 685-residue polypeptide: MVTSVRTQPPVIMPGMQTEIKTQATNLAANLSAVRESATATLSGEIKGPQLEDFPALIKQASLDALFKCGKDAEALKEVFTNSNNVAGKKAIMEFAGLFRSALNATSDSPEAKTLLMKVGAEYTAQIIKDGLKEKSAFGPWLPETKKAEAKLENLEKQLLDIIKNNTGGELSKLSTNLVMQEVMPYIASCIEHNFGCTLDPLTRSNLTHLVDKAAAKAVEALDMCHQKLTQEQGTSVGREARHLEMQTLIPLLLRNVFAQIPADKLPDPKIPEPAAGPVPDGGKKAEPTGINININIDSSNHSVDNSKHINNSRSHVDNSQRHIDNSNHDNSRKTIDNSRTFIDNSQRNGESHHSTNSSNVSHSHSRVDSTTHQTETAHSASTGAIDHGIAGKIDVTAHATAEAVTNASSESKDGKVVTSEKGTTGETTSFDEVDGVTSKSIIGKPVQATVHGVDDNKQQSQTAEIVNVKPLASQLAGVENVKTDTLQSDTTVITGNKAGTTDNDNSQTDKTGPFSGLKFKQNSFLSTVPSVTNMHSMHFDARETFLGVIRKALEPDTSTPFPVRRAFDGLRAEILPNDTIKSAALKAQCSDIDKHPELKAKMETLKEVITHHPQKEKLAEIALQFAREAGLTRLKGETDYVLSNVLDGLIGDGSWRAGPAYESYLNKPGVDRVITTVDGLHMQR.

Disordered stretches follow at residues 265–386 (KLPD…TGAI), 404–432 (AVTN…TSFD), and 494–514 (ITGN…KTGP). The span at 291–304 (INININIDSSNHSV) shows a compositional bias: low complexity. Residues 315–337 (SHVDNSQRHIDNSNHDNSRKTID) are compositionally biased toward basic and acidic residues. Polar residues-rich tracts occupy residues 338–349 (NSRTFIDNSQRN) and 369–383 (DSTT…SAST). Positions 417-429 (VVTSEKGTTGETT) are enriched in low complexity. Positions 494-511 (ITGNKAGTTDNDNSQTDK) are enriched in polar residues. Positions 497-669 (NKAGTTDNDN…PAYESYLNKP (173 aa)) are actin-binding and polymerization.

The protein belongs to the SipA/IpaA family. As to quaternary structure, interacts with human PERP.

It localises to the secreted. Actin-binding protein that interferes with host cell actin cytoskeleton. It stimulates actin polymerization and counteracts F-actin destabilizing proteins. Potentiates SipC activity; both are required for an efficient bacterial internalization. In vitro, forms a complex with host cell protein T-plastin increasing actin bundling. It inhibits ADF/cofilin-directed depolymerization both by preventing binding of ADF and cofilin and by displacing them from F-actin. Also protects F-actin from gelsolin-directed severing and reanneals gelsolin-severed F-actin fragments. Promotes human PERP relocalization to punctate structures throughout the host epithelial cell cytoplasm. Promotes localization of human PERP to the apical cell surface of mucosal epithelial cells during infection, may thereby promote host neutrophil transepithelial migration. This chain is Cell invasion protein SipA (sipA), found in Salmonella typhimurium (strain SL1344).